The sequence spans 760 residues: Cyclin-D-binding Myb-like transcription factor 1 (760 aa).

The interval 1–237 is interaction with CCND2; sequence MSTVEEDSDT…TPEEIEKLKE (237 aa). Residues 24–63 are disordered; that stretch reads DTDGNLILHCPQNDPDEIDSEDSTEPPHKRLCLSSEDDQS. Residues 37 to 47 are compositionally biased toward acidic residues; sequence DPDEIDSEDST. Residues 87-170 form a required for transcriptional activation region; sequence VTMTATTEVA…IDILMNNIER (84 aa). Residues 87–458 form a required for DNA-binding region; that stretch reads VTMTATTEVA…DNTAISPSPM (372 aa). The segment at 176–690 is interaction with CCND1, CCND2 and CCND3; it reads GIKDATEIIF…PTIVHQVHQT (515 aa). Residues 225 to 263 form the Myb-like 1 domain; it reads GKYTPEEIEKLKELRIKHGNDWATIGAALGRSASSVKDR. The HTH myb-type domain maps to 268 to 333; the sequence is KDTCNTGKWT…KWLNYLNWKQ (66 aa). The segment at residues 306–329 is a DNA-binding region (H-T-H motif); it reads WAAVAERVGTRSEKQCRSKWLNYL. Residues 339–388 enclose the Myb-like 2 domain; that stretch reads WTKEDEINLILRIAELDVADENDINWDLLAEGWSSVRSPQWLRSKWWTIK. A required for transcriptional activation region spans residues 459-760; sequence AALQIPVQIT…KDVEDLVNCH (302 aa). Disordered stretches follow at residues 593 to 614 and 738 to 760; these read DSDLHSSDFPEPPDALEADTFP and IGSSLGSPVSEDSKDVEDLVNCH.

Belongs to the DMTF1 family. Interacts with the D-type cyclins CCND1, CCND2 and CCND3. Interaction with D-type cyclins may modulate transcriptional activation by this protein. Post-translationally, phosphorylated by the cyclin-D2/CDK4, cyclin-D3/CDK4 and cyclin-D2/CDK6 complexes and to a lesser extent by the cyclin-D1/CDK4 complex.

The protein localises to the nucleus. Transcriptional activator which activates the CDKN2A/ARF locus in response to Ras-Raf signaling, thereby promoting p53/TP53-dependent growth arrest. Binds to the consensus sequence 5'-CCCG[GT]ATGT-3'. The protein is Cyclin-D-binding Myb-like transcription factor 1 (Dmtf1) of Rattus norvegicus (Rat).